The chain runs to 411 residues: MLLKTVLLLGHVAQVLMLDNGLLQTPPMGWLAWERFRCNINCDEDPKNCISEQLFMEMADRMAQDGWRDMGYTYLNIDDCWIGGRDASGRLMPDPKRFPHGIPFLADYVHSLGLKLGIYADMGNFTCMGYPGTTLDKVVQDAQTFAEWKVDMLKLDGCFSTPEERAQGYPKMAAALNATGRPIAFSCSWPAYEGGLPPRVNYSLLADICNLWRNYDDIQDSWWSVLSILNWFVEHQDILQPVAGPGHWNDPDMLLIGNFGLSLEQSRAQMALWTVLAAPLLMSTDLRTISAQNMDILQNPLMIKINQDPLGIQGRRIHKEKSLIEVYMRPLSNKASALVFFSCRTDMPYRYHSSLGQLNFTGSVIYEAQDVYSGDIISGLRDETNFTVIINPSGVVMWYLYPIKNLEMSQQ.

The first 17 residues, 1 to 17 (MLLKTVLLLGHVAQVLM), serve as a signal peptide directing secretion. 2 disulfides stabilise this stretch: Cys-38/Cys-80 and Cys-42/Cys-49. Substrate is bound at residue 78–79 (DD). Asn-124 carries N-linked (GlcNAc...) asparagine glycosylation. The cysteines at positions 127 and 158 are disulfide-linked. Lys-154 lines the substrate pocket. Asp-156 acts as the Nucleophile in catalysis. Asn-177 carries N-linked (GlcNAc...) asparagine glycosylation. A disulfide bridge links Cys-187 with Cys-209. Residue Ser-188 coordinates substrate. Asn-201 carries an N-linked (GlcNAc...) asparagine glycan. The substrate site is built by Arg-213 and Asp-217. Residue Asp-217 is the Proton donor of the active site. Phosphoserine occurs at positions 322 and 332. N-linked (GlcNAc...) asparagine glycans are attached at residues Asn-359 and Asn-385.

Belongs to the glycosyl hydrolase 27 family. As to quaternary structure, homodimer.

It is found in the lysosome. The catalysed reaction is Cleavage of non-reducing alpha-(1-&gt;3)-N-acetylgalactosamine residues from human blood group A and AB mucin glycoproteins, Forssman hapten and blood group A lacto series glycolipids.. It catalyses the reaction a neolactoside IV(3)-alpha-GalNAc,IV(2)-alpha-Fuc-nLc4Cer(d18:1(4E)) + H2O = a neolactoside IV(2)-alpha-Fuc-nLc4Cer(d18:1(4E)) + N-acetyl-alpha-D-galactosamine. It carries out the reaction a neolactoside IV(3)-alpha-GalNAc,IV(2)-alpha-Fuc-nLc4Cer(d18:0) + H2O = a neolactoside IV(2)-alpha-Fuc-nLc4Cer(d18:0) + N-acetyl-alpha-D-galactosamine. The enzyme catalyses a globoside IV3GalNAc-Gb4Cer + H2O = N-acetyl-alpha-D-galactosamine + a globoside Gb4Cer. Its function is as follows. Removes terminal alpha-N-acetylgalactosamine residues from glycolipids and glycopeptides. Required for the breakdown of glycolipids. The protein is Alpha-N-acetylgalactosaminidase of Homo sapiens (Human).